Reading from the N-terminus, the 84-residue chain is Small ribosomal subunit protein bS20 (84 aa).

A disordered region spans residues 1 to 28 (MPNIKSAIKRVKTADTRNSRNASQRSAM).

This sequence belongs to the bacterial ribosomal protein bS20 family.

In terms of biological role, binds directly to 16S ribosomal RNA. In Listeria welshimeri serovar 6b (strain ATCC 35897 / DSM 20650 / CCUG 15529 / CIP 8149 / NCTC 11857 / SLCC 5334 / V8), this protein is Small ribosomal subunit protein bS20.